A 411-amino-acid polypeptide reads, in one-letter code: Tyrosine--tRNA ligase (411 aa).

Tyrosine 34 contacts L-tyrosine. The 'HIGH' region signature appears at 39 to 48; it reads CTATSLHIGS. Residues tyrosine 171 and glutamine 175 each coordinate L-tyrosine. A 'KMSKS' region motif is present at residues 231–235; that stretch reads KMGKT. Residue lysine 234 participates in ATP binding. In terms of domain architecture, S4 RNA-binding spans 345-411; the sequence is ISAYELFHEA…GKKRHILVRV (67 aa).

This sequence belongs to the class-I aminoacyl-tRNA synthetase family. TyrS type 1 subfamily. In terms of assembly, homodimer.

Its subcellular location is the cytoplasm. The catalysed reaction is tRNA(Tyr) + L-tyrosine + ATP = L-tyrosyl-tRNA(Tyr) + AMP + diphosphate + H(+). Functionally, catalyzes the attachment of tyrosine to tRNA(Tyr) in a two-step reaction: tyrosine is first activated by ATP to form Tyr-AMP and then transferred to the acceptor end of tRNA(Tyr). This chain is Tyrosine--tRNA ligase, found in Rickettsia massiliae (strain Mtu5).